Reading from the N-terminus, the 236-residue chain is Putative glutamine amidotransferase-like protein YvdE (236 aa).

In terms of domain architecture, Glutamine amidotransferase type-1 spans 17-236 (SPFWWNKVSY…IFEIFANGTI (220 aa)).

The polypeptide is Putative glutamine amidotransferase-like protein YvdE (yvdE) (Lactococcus lactis subsp. lactis (strain IL1403) (Streptococcus lactis)).